Here is a 93-residue protein sequence, read N- to C-terminus: Large ribosomal subunit protein eL42 (93 aa).

Residues Cys-11 and Cys-14 each contribute to the Zn(2+) site. The C4-type zinc finger occupies 11-75 (CPNCDEHHQL…TDLKYRCSEC (65 aa)). The interval 24 to 62 (KVRSGRSSGMKWDARRTKRANASIGNHGRFSKVPVGNKP) is disordered. Cys-72 and Cys-75 together coordinate Zn(2+).

It belongs to the eukaryotic ribosomal protein eL42 family. In terms of assembly, part of the 50S ribosomal subunit. Requires Zn(2+) as cofactor.

Functionally, binds to the 23S rRNA. In Halobacterium salinarum (strain ATCC 700922 / JCM 11081 / NRC-1) (Halobacterium halobium), this protein is Large ribosomal subunit protein eL42.